The chain runs to 213 residues: Superoxide dismutase [Mn] (213 aa).

Positions 27, 82, 168, and 172 each coordinate Mn(2+).

It belongs to the iron/manganese superoxide dismutase family. Homodimer.

It carries out the reaction 2 superoxide + 2 H(+) = H2O2 + O2. With respect to regulation, inhibited by hydrogen peroxide. Destroys superoxide anion radicals which are normally produced within the cells and which are toxic to biological systems. The sequence is that of Superoxide dismutase [Mn] (sodA) from Haemophilus ducreyi (strain 35000HP / ATCC 700724).